The sequence spans 285 residues: Glycine--tRNA ligase alpha subunit (285 aa).

Belongs to the class-II aminoacyl-tRNA synthetase family. As to quaternary structure, tetramer of two alpha and two beta subunits.

Its subcellular location is the cytoplasm. It catalyses the reaction tRNA(Gly) + glycine + ATP = glycyl-tRNA(Gly) + AMP + diphosphate. This is Glycine--tRNA ligase alpha subunit from Granulibacter bethesdensis (strain ATCC BAA-1260 / CGDNIH1).